The chain runs to 166 residues: NADH-quinone oxidoreductase subunit I (166 aa).

2 4Fe-4S ferredoxin-type domains span residues 57 to 87 (LRRYPNGEERCIACKLCEAVCPALAITIESE) and 97 to 126 (TRYDIDMFKCINCGLCEESCPVDSIVVTPI). [4Fe-4S] cluster contacts are provided by Cys-67, Cys-70, Cys-73, Cys-77, Cys-106, Cys-109, Cys-112, and Cys-116.

It belongs to the complex I 23 kDa subunit family. As to quaternary structure, NDH-1 is composed of 14 different subunits. Subunits NuoA, H, J, K, L, M, N constitute the membrane sector of the complex. [4Fe-4S] cluster serves as cofactor.

The protein resides in the cell inner membrane. The catalysed reaction is a quinone + NADH + 5 H(+)(in) = a quinol + NAD(+) + 4 H(+)(out). In terms of biological role, NDH-1 shuttles electrons from NADH, via FMN and iron-sulfur (Fe-S) centers, to quinones in the respiratory chain. The immediate electron acceptor for the enzyme in this species is believed to be ubiquinone. Couples the redox reaction to proton translocation (for every two electrons transferred, four hydrogen ions are translocated across the cytoplasmic membrane), and thus conserves the redox energy in a proton gradient. This is NADH-quinone oxidoreductase subunit I from Legionella pneumophila (strain Lens).